The primary structure comprises 126 residues: Profilin-1B (126 aa).

The segment at 2–36 (SWQTYVDTNLVGTGAVTQAAILGLDGNTWATSAGF) is actin binding. Lysine 104 bears the N6,N6,N6-trimethyllysine mark.

Belongs to the profilin family. As to quaternary structure, occurs in many kinds of cells as a complex with monomeric actin in a 1:1 ratio.

Its subcellular location is the cytoplasm. It is found in the cytoskeleton. Functionally, binds to actin and affects the structure of the cytoskeleton. At high concentrations, profilin prevents the polymerization of actin, whereas it enhances it at low concentrations. By binding to PIP2, it inhibits the formation of IP3 and DG. The polypeptide is Profilin-1B (Acanthamoeba castellanii (Amoeba)).